A 172-amino-acid polypeptide reads, in one-letter code: Small ribosomal subunit protein uS5c (172 aa).

The region spanning 15 to 78 is the S5 DRBM domain; that stretch reads WEEKVVQVKR…TDAKKHIINV (64 aa).

This sequence belongs to the universal ribosomal protein uS5 family. As to quaternary structure, part of the 30S ribosomal subunit. Contacts protein S4.

The protein localises to the plastid. It localises to the chloroplast. With S4 and S12 plays an important role in translational accuracy. The protein is Small ribosomal subunit protein uS5c (rps5) of Gracilaria tenuistipitata var. liui (Red alga).